Consider the following 162-residue polypeptide: SsrA-binding protein (162 aa).

It belongs to the SmpB family.

The protein localises to the cytoplasm. Required for rescue of stalled ribosomes mediated by trans-translation. Binds to transfer-messenger RNA (tmRNA), required for stable association of tmRNA with ribosomes. tmRNA and SmpB together mimic tRNA shape, replacing the anticodon stem-loop with SmpB. tmRNA is encoded by the ssrA gene; the 2 termini fold to resemble tRNA(Ala) and it encodes a 'tag peptide', a short internal open reading frame. During trans-translation Ala-aminoacylated tmRNA acts like a tRNA, entering the A-site of stalled ribosomes, displacing the stalled mRNA. The ribosome then switches to translate the ORF on the tmRNA; the nascent peptide is terminated with the 'tag peptide' encoded by the tmRNA and targeted for degradation. The ribosome is freed to recommence translation, which seems to be the essential function of trans-translation. This chain is SsrA-binding protein, found in Buchnera aphidicola subsp. Acyrthosiphon pisum (strain 5A).